We begin with the raw amino-acid sequence, 326 residues long: Toluene-4-monooxygenase system, ferredoxin--NAD(+) reductase component (326 aa).

The region spanning 1–92 is the 2Fe-2S ferredoxin-type domain; that stretch reads MFNIQSDDLL…DLKIKVINRA (92 aa). [2Fe-2S] cluster contacts are provided by Cys36, Cys41, Cys44, and Cys76. The ferredoxin-reductase stretch occupies residues 95–326; that stretch reads RASHPPKRFS…FEAIHFDRFF (232 aa). The FAD-binding FR-type domain occupies 100–195; sequence PKRFSTRVVS…DGPYGLSVLK (96 aa). Residues 146 to 149, 162 to 164, and 170 to 172 contribute to the FAD site; these read RAYS, IVK, and KVS.

The protein belongs to the bacterial ring-hydroxylating dioxygenase ferredoxin reductase family. Monomer. The alkene monooxygenase multicomponent enzyme system is composed of an electron transfer component and a monooxygenase component interacting with the effector protein TmoD. The electron transfer component is composed of a ferredoxin reductase (TmoF) and a ferredoxin (TmoC), and the monooxygenase component is formed by a heterohexamer (dimer of heterotrimers) of two alpha subunits (TmoA), two beta subunits (TmoE) and two gamma subunits (TmoB). Requires FAD as cofactor. It depends on [2Fe-2S] cluster as a cofactor.

The catalysed reaction is 2 reduced [2Fe-2S]-[ferredoxin] + NAD(+) + H(+) = 2 oxidized [2Fe-2S]-[ferredoxin] + NADH. The protein operates within xenobiotic degradation; toluene degradation. Its function is as follows. Reductase component of the toluene-4-monooxygenase multicomponent enzyme system which catalyzes the O2- and NADH-dependent hydroxylation of toluene to form p-cresol. Ferredoxin reductase catalyzes the transfer of electrons from NADH to ferredoxin (TmoC). This Ectopseudomonas mendocina (Pseudomonas mendocina) protein is Toluene-4-monooxygenase system, ferredoxin--NAD(+) reductase component.